Consider the following 471-residue polypeptide: Proton-coupled amino acid transporter-like protein pathetic (471 aa).

A glycan (N-linked (GlcNAc...) asparagine) is linked at N61. 10 consecutive transmembrane segments (helical) span residues F81–I101, I153–A173, A187–V207, V216–V236, L253–L273, F283–L303, L337–I357, V375–G395, F397–I417, and W432–T452.

It belongs to the amino acid/polyamine transporter 2 family. In third instar larvae, expressed at highest levels in the brain and digestive system with particularly high levels in surface glia of the brain (at protein level). In third instar larvae, expressed in all cells of the body wall (at protein level). Within the body wall of third instar larvae, most highly expressed in epithelial cells and sensory neurons. Expressed at a similar level in all da neurons (at protein level). Widely expressed during embryonic and late larval stages. Levels are highly dynamic in embryogenesis with surges of expression in many structures, including muscle primordia, salivary glands, proventriculus, trachea and gonads. Expressed in all or most cells of larval imaginal disks. Expression is also particularly strong in the pouch and hinge regions of the wing disk and in the morphogenetic furrow of the eye disk.

The protein resides in the cell membrane. It localises to the lysosome membrane. The protein localises to the late endosome membrane. Its subcellular location is the cell projection. It is found in the axon. The protein resides in the dendrite. It localises to the perikaryon. The protein localises to the cytoplasm. In terms of biological role, amino acid transporter which has pH-dependent electrogenic transport activity for alanine and glycine but not for proline. Plays a role in positive regulation of growth by directly or indirectly modulating the effects of the TOR signaling pathway. Required in a cell-autonomous manner for dendrite growth in neurons with large dendrite arbors. This chain is Proton-coupled amino acid transporter-like protein pathetic, found in Drosophila melanogaster (Fruit fly).